A 191-amino-acid chain; its full sequence is Holliday junction branch migration complex subunit RuvA (191 aa).

The interval Met-1–Leu-64 is domain I. The tract at residues Asn-65–Ile-142 is domain II. The segment at Ile-143–Asp-146 is flexible linker. The segment at Asp-146–Gln-191 is domain III.

This sequence belongs to the RuvA family. In terms of assembly, homotetramer. Forms an RuvA(8)-RuvB(12)-Holliday junction (HJ) complex. HJ DNA is sandwiched between 2 RuvA tetramers; dsDNA enters through RuvA and exits via RuvB. An RuvB hexamer assembles on each DNA strand where it exits the tetramer. Each RuvB hexamer is contacted by two RuvA subunits (via domain III) on 2 adjacent RuvB subunits; this complex drives branch migration. In the full resolvosome a probable DNA-RuvA(4)-RuvB(12)-RuvC(2) complex forms which resolves the HJ.

It is found in the cytoplasm. In terms of biological role, the RuvA-RuvB-RuvC complex processes Holliday junction (HJ) DNA during genetic recombination and DNA repair, while the RuvA-RuvB complex plays an important role in the rescue of blocked DNA replication forks via replication fork reversal (RFR). RuvA specifically binds to HJ cruciform DNA, conferring on it an open structure. The RuvB hexamer acts as an ATP-dependent pump, pulling dsDNA into and through the RuvAB complex. HJ branch migration allows RuvC to scan DNA until it finds its consensus sequence, where it cleaves and resolves the cruciform DNA. This Ehrlichia ruminantium (strain Welgevonden) protein is Holliday junction branch migration complex subunit RuvA.